A 423-amino-acid polypeptide reads, in one-letter code: D-tagatose-1,6-bisphosphate aldolase subunit GatZ (423 aa).

It belongs to the GatZ/KbaZ family. GatZ subfamily. Forms a complex with GatY.

Its pathway is carbohydrate metabolism; D-tagatose 6-phosphate degradation; D-glyceraldehyde 3-phosphate and glycerone phosphate from D-tagatose 6-phosphate: step 2/2. Component of the tagatose-1,6-bisphosphate aldolase GatYZ that is required for full activity and stability of the Y subunit. Could have a chaperone-like function for the proper and stable folding of GatY. When expressed alone, GatZ does not show any aldolase activity. Is involved in the catabolism of galactitol. This is D-tagatose-1,6-bisphosphate aldolase subunit GatZ from Salmonella paratyphi B (strain ATCC BAA-1250 / SPB7).